The following is a 398-amino-acid chain: Dihydrolipoyllysine-residue succinyltransferase component of 2-oxoglutarate dehydrogenase complex (398 aa).

The Lipoyl-binding domain maps to 2–77 (SIKIIIPSLG…TVGEEVGEIN (76 aa)). K43 carries the N6-lipoyllysine modification. The Peripheral subunit-binding (PSBD) domain maps to 112-149 (ILAPSVQKLVTENKLDPNNIKGTGRGGRITKYDVLETI). Catalysis depends on residues H369 and D373.

It belongs to the 2-oxoacid dehydrogenase family. Forms a 24-polypeptide structural core with octahedral symmetry. Part of the 2-oxoglutarate dehydrogenase (OGDH) complex composed of E1 (2-oxoglutarate dehydrogenase), E2 (dihydrolipoamide succinyltransferase) and E3 (dihydrolipoamide dehydrogenase); the complex contains multiple copies of the three enzymatic components (E1, E2 and E3). It depends on (R)-lipoate as a cofactor.

It catalyses the reaction N(6)-[(R)-dihydrolipoyl]-L-lysyl-[protein] + succinyl-CoA = N(6)-[(R)-S(8)-succinyldihydrolipoyl]-L-lysyl-[protein] + CoA. It functions in the pathway amino-acid degradation; L-lysine degradation via saccharopine pathway; glutaryl-CoA from L-lysine: step 6/6. Functionally, E2 component of the 2-oxoglutarate dehydrogenase (OGDH) complex which catalyzes the second step in the conversion of 2-oxoglutarate to succinyl-CoA and CO(2). The protein is Dihydrolipoyllysine-residue succinyltransferase component of 2-oxoglutarate dehydrogenase complex (sucB) of Rickettsia typhi (strain ATCC VR-144 / Wilmington).